Here is a 689-residue protein sequence, read N- to C-terminus: MTSTLATRLSTYSISLILQRIKIIKRCYSAPVLRDYQQDAIDACVNSIRQGTKRIGVSLATGGGKTVIFSNLINQLRQNYFKERQGNFKSLILVHRRELALQATATLKKIFPDLKVHIEMGKYDCDIEDSDVIVASVQTLIRRLHKYDTNSVNLIIIDEAHHSVANSYRSILDHFKASTAETKIPVIGFSATFERADKRALSMVMDKIVYHRGILEMIDDKWLCEAKFTSVKIEADLSDVKSTADDFQLAPLSSLMNTKEINEVILKTYLHKKQEKSLKSTLLFGVDKAHVQSLHKLFKDNGINTDYVTSDTKQIERDNIIQKFKNGETEVLMNCGIFTEGTDMPNIDCILLCRPTKSRSLLIQMIGRGLRLHHSKDHCHIIDFIGASSVGVVSAPTLLGIRSDDIEFDDATVEDLKAIQGEIIAKQQKIDERLRALFQTDEAAMENVTERNSVADWIHSANSVDLTLCSFDSFRNFTQSNNSYPSGKEFDEASEAVKEMELLMNSQYPWVKFASNAWGLPLKGKNHLRIYKEKSEDKLSMVYHLKMYRQLPCFITNKYADYVPKSIIKDANLWNVMSKVEKIINTLNSDLEGQTMQYQAISSKYSKWRQTVPTSKQRDFVFRKLKKVYGESSKDFIRLSLDDVTTYVNTKMTKGDASNLIFASSLAPVYPLKSLLRILEYQKRRSFIK.

The Helicase ATP-binding domain maps to 46 to 211 (NSIRQGTKRI…SMVMDKIVYH (166 aa)). 59 to 66 (LATGGGKT) is an ATP binding site. A DEAH box motif is present at residues 158–161 (DEAH). One can recognise a Helicase C-terminal domain in the interval 265-438 (ILKTYLHKKQ…KIDERLRALF (174 aa)).

Belongs to the helicase family. IRC3 subfamily.

The protein resides in the mitochondrion. This Saccharomyces cerevisiae (strain ATCC 204508 / S288c) (Baker's yeast) protein is Putative ATP-dependent helicase IRC3 (IRC3).